The primary structure comprises 1203 residues: DNA-directed RNA polymerase subunit beta (1203 aa).

The segment covering 1174 to 1195 has biased composition (basic and acidic residues); sequence AAQEAKAAFEAEEAEKATKAEA. The disordered stretch occupies residues 1174-1203; it reads AAQEAKAAFEAEEAEKATKAEATEEAAEQE.

The protein belongs to the RNA polymerase beta chain family. As to quaternary structure, the RNAP catalytic core consists of 2 alpha, 1 beta, 1 beta' and 1 omega subunit. When a sigma factor is associated with the core the holoenzyme is formed, which can initiate transcription.

It catalyses the reaction RNA(n) + a ribonucleoside 5'-triphosphate = RNA(n+1) + diphosphate. In terms of biological role, DNA-dependent RNA polymerase catalyzes the transcription of DNA into RNA using the four ribonucleoside triphosphates as substrates. The chain is DNA-directed RNA polymerase subunit beta from Streptococcus pneumoniae serotype 19F (strain G54).